The primary structure comprises 817 residues: Ribonuclease R 1 (817 aa).

Residues Arg-259 to Glu-584 enclose the RNB domain. The 81-residue stretch at Gly-637 to Leu-717 folds into the S1 motif domain. The disordered stretch occupies residues Ala-728–Gly-817. The span at Lys-729–Ser-742 shows a compositional bias: basic residues. Basic and acidic residues-rich tracts occupy residues Arg-767 to Lys-777 and Lys-795 to Arg-810.

The protein belongs to the RNR ribonuclease family. RNase R subfamily.

It localises to the cytoplasm. The catalysed reaction is Exonucleolytic cleavage in the 3'- to 5'-direction to yield nucleoside 5'-phosphates.. Its function is as follows. 3'-5' exoribonuclease that releases 5'-nucleoside monophosphates and is involved in maturation of structured RNAs. The chain is Ribonuclease R 1 (rnr1) from Lactococcus lactis subsp. lactis (strain IL1403) (Streptococcus lactis).